Consider the following 962-residue polypeptide: IQ motif and SEC7 domain-containing protein 1 (962 aa).

The interval 1 to 96 (MACRRRYLSS…STSVLRKQAE (96 aa)) is disordered. Residues 8–19 (LSSLETGSSLST) show a composition bias toward low complexity. Positions 30–39 (SSETGTSLDS) are enriched in polar residues. Serine 89, serine 105, and serine 107 each carry phosphoserine. In terms of domain architecture, IQ spans 134 to 163 (TRHAARTIQTAFRQYQMNKNFERLRSSMSE). 3 positions are modified to phosphoserine: serine 180, serine 248, and serine 252. Disordered stretches follow at residues 264–292 (SEEV…HRKL), 311–333 (LSPP…DLRL), and 348–516 (KEDK…DSPA). Residues 273 to 292 (ARARDTEPKPGLHGMDHRKL) show a composition bias toward basic and acidic residues. Composition is skewed to basic and acidic residues over residues 365–375 (ERPEPRLRVEH) and 429–445 (LPRE…RPLE). Residues 470–488 (DSINSTSNSNDTINCSSES) are compositionally biased toward low complexity. A phosphoserine mark is found at serine 511 and serine 514. An SEC7 domain is found at 516–709 (AFSNDVIRKR…IGIYERIRKR (194 aa)). The 93-residue stretch at 773-865 (HQREIFLFND…LRESVAEVQE (93 aa)) folds into the PH domain. Residue serine 891 is modified to Phosphoserine. Tyrosine 910 is modified (phosphotyrosine). The interval 921–962 (LSSSLRDLSEAGKRGRRSSAGSLESNVEFQPFQPSQPPVLCS) is disordered. Phosphoserine is present on residues serine 923 and serine 924. Residues 939–948 (SAGSLESNVE) are compositionally biased toward polar residues.

Belongs to the BRAG family. In terms of assembly, interacts with ARF1 and ARF6. Interacts with GRIA2; the interaction is required for ARF6 activation.

The protein localises to the cytoplasm. Its subcellular location is the nucleus. It is found in the postsynaptic density. It localises to the cytoplasmic vesicle. The protein resides in the secretory vesicle. The protein localises to the synaptic vesicle. Guanine nucleotide exchange factor for ARF1 and ARF6. Guanine nucleotide exchange factor activity is enhanced by lipid binding. Accelerates GTP binding by ARFs of all three classes. Guanine nucleotide exchange protein for ARF6, mediating internalization of beta-1 integrin. Involved in neuronal development. In neurons, plays a role in the control of vesicle formation by endocytoc cargo. Upon long term depression, interacts with GRIA2 and mediates the activation of ARF6 to internalize synaptic AMPAR receptors. The polypeptide is IQ motif and SEC7 domain-containing protein 1 (Rattus norvegicus (Rat)).